A 618-amino-acid chain; its full sequence is DNA mismatch repair protein MutL (618 aa).

Belongs to the DNA mismatch repair MutL/HexB family.

This protein is involved in the repair of mismatches in DNA. It is required for dam-dependent methyl-directed DNA mismatch repair. May act as a 'molecular matchmaker', a protein that promotes the formation of a stable complex between two or more DNA-binding proteins in an ATP-dependent manner without itself being part of a final effector complex. The chain is DNA mismatch repair protein MutL from Bradyrhizobium sp. (strain BTAi1 / ATCC BAA-1182).